The primary structure comprises 582 residues: Poly(A) RNA polymerase, mitochondrial (582 aa).

The transit peptide at 1–37 (MAVPGVGLLTRLNLCARRRTRVQRPIVRLLSCPGTVA) directs the protein to the mitochondrion. Lysine 90 carries the post-translational modification N6-acetyllysine. ATP-binding positions include 107-109 (YES) and 241-242 (GC). Aspartate 243 and aspartate 245 together coordinate Mg(2+). The region spanning 437–483 (LELLLKEFFEYFGNFAFDKNSINIRQGREQNKPDSSPLYIQNPFETS) is the PAP-associated domain.

Belongs to the DNA polymerase type-B-like family. In terms of assembly, homodimer. It depends on Mg(2+) as a cofactor. Mn(2+) is required as a cofactor. Ubiquitous, with stronger expression in tissues with high energy requirements: heart, brain, and skeletal muscle.

The protein localises to the cytoplasm. Its subcellular location is the mitochondrion. It carries out the reaction RNA(n) + ATP = RNA(n)-3'-adenine ribonucleotide + diphosphate. Functionally, polymerase that creates the 3' poly(A) tail of mitochondrial transcripts. Can use all four nucleotides, but has higher activity with ATP and UTP (in vitro). Plays a role in replication-dependent histone mRNA degradation. May be involved in the terminal uridylation of mature histone mRNAs before their degradation is initiated. Might be responsible for the creation of some UAA stop codons which are not encoded in mtDNA. The sequence is that of Poly(A) RNA polymerase, mitochondrial (MTPAP) from Homo sapiens (Human).